The sequence spans 165 residues: Crossover junction endodeoxyribonuclease RuvC (165 aa).

Catalysis depends on residues D7, E68, and H142. Mg(2+) is bound by residues D7, E68, and H142.

The protein belongs to the RuvC family. Homodimer which binds Holliday junction (HJ) DNA. The HJ becomes 2-fold symmetrical on binding to RuvC with unstacked arms; it has a different conformation from HJ DNA in complex with RuvA. In the full resolvosome a probable DNA-RuvA(4)-RuvB(12)-RuvC(2) complex forms which resolves the HJ. It depends on Mg(2+) as a cofactor.

It is found in the cytoplasm. The catalysed reaction is Endonucleolytic cleavage at a junction such as a reciprocal single-stranded crossover between two homologous DNA duplexes (Holliday junction).. Its function is as follows. The RuvA-RuvB-RuvC complex processes Holliday junction (HJ) DNA during genetic recombination and DNA repair. Endonuclease that resolves HJ intermediates. Cleaves cruciform DNA by making single-stranded nicks across the HJ at symmetrical positions within the homologous arms, yielding a 5'-phosphate and a 3'-hydroxyl group; requires a central core of homology in the junction. The consensus cleavage sequence is 5'-(A/T)TT(C/G)-3'. Cleavage occurs on the 3'-side of the TT dinucleotide at the point of strand exchange. HJ branch migration catalyzed by RuvA-RuvB allows RuvC to scan DNA until it finds its consensus sequence, where it cleaves and resolves the cruciform DNA. The sequence is that of Crossover junction endodeoxyribonuclease RuvC from Anaplasma marginale (strain St. Maries).